The following is a 286-amino-acid chain: MSAQILDGKAIAAELREQVRKQVEARVERGGRRPGLAVVLVGADPASTVYVGKKRQACEQLGMHSSAHELPAETTQDELLALVDELNGRDEIDGILVQLPLPDHIDEQTVIDRIHPDKDVDGFHPVNMGRLTLRLPGLRPCTPNGVMTMLAHAGIELEGKDAVIIGQSNIVGRPMAMELLNARCTITICHSRTRNLADRVRAADIVVAAVGRPGFVPGDWIKPGAVVIDVGINRLESGKLTGDVDFAAARELAGWITPVPGGVGPMTVATLMANTLAAAEARDSRA.

NADP(+) contacts are provided by residues 166 to 168, Ser-191, and Ile-232; that span reads GQS.

This sequence belongs to the tetrahydrofolate dehydrogenase/cyclohydrolase family. In terms of assembly, homodimer.

The catalysed reaction is (6R)-5,10-methylene-5,6,7,8-tetrahydrofolate + NADP(+) = (6R)-5,10-methenyltetrahydrofolate + NADPH. The enzyme catalyses (6R)-5,10-methenyltetrahydrofolate + H2O = (6R)-10-formyltetrahydrofolate + H(+). Its pathway is one-carbon metabolism; tetrahydrofolate interconversion. Its function is as follows. Catalyzes the oxidation of 5,10-methylenetetrahydrofolate to 5,10-methenyltetrahydrofolate and then the hydrolysis of 5,10-methenyltetrahydrofolate to 10-formyltetrahydrofolate. The sequence is that of Bifunctional protein FolD from Alkalilimnicola ehrlichii (strain ATCC BAA-1101 / DSM 17681 / MLHE-1).